Here is a 657-residue protein sequence, read N- to C-terminus: MEKKRSYYALLIPTLLTVWLACAGHSCARHAKAKPPMAGPPRCPNCGPMVVPYPLSTGPTCGDQAYRINCVGGKLYFGALHGSSYVITSINSVTQRIVLRPPGLASSVSCISADVSKQGLELDPHLPFSITSSNTILLLNCSQAMLQAPIDCSPTSLCYSYIKNNASPCSKAPLCCTFRTDGSQTAYTIRINGGGCLAYQSFVGLNPNKEVPPPGKKWPDTGLELQWALPKEPVCKTDVDCNLLLGKSKCLPDPTSLGLKRCSCKKGLEWDPVNAICGKCRHGKHCKKKKKTVVFAGAAVAVVGVTLAIAVAVIGTKHSHQKVKKDIHKNIVKEREEMLSANSTGKSSRIFTGREITKATNNFSKDNLIGTGGFGEVFKAVLEDGTITAIKRAKLNNTKGTDQILNEVRILCQVNHRSLVRLLGCCVDLELPLLIYEFIPNGTLFEHLHGSSDRTWKPLTWRRRLQIAYQTAEGLAYLHSAAQPPIYHRDVKSSNILLDEKLNAKVSDFGLSRLVDLTETANNESHIFTGAQGTLGYLDPEYYRNFQLTDKSDVYSFGVVLLEMVTSKKAIDFTREEEDVNLVMYINKMMDQERLTECIDPLLKKTANKIDMQTIQQLGNLASACLNERRQNRPSMKEVADEIEYIINILSQEVTET.

A signal peptide spans 1–23 (MEKKRSYYALLIPTLLTVWLACA). Over 24 to 293 (GHSCARHAKA…KHCKKKKKTV (270 aa)) the chain is Extracellular. Asn140 carries an N-linked (GlcNAc...) asparagine glycan. Residues 294–314 (VFAGAAVAVVGVTLAIAVAVI) traverse the membrane as a helical segment. Topologically, residues 315-657 (GTKHSHQKVK…NILSQEVTET (343 aa)) are cytoplasmic. In terms of domain architecture, Protein kinase spans 363-646 (FSKDNLIGTG…KEVADEIEYI (284 aa)). ATP is bound by residues 369 to 377 (IGTGGFGEV) and Lys391. Asp490 serves as the catalytic Proton acceptor.

This sequence belongs to the protein kinase superfamily. Ser/Thr protein kinase family.

Its subcellular location is the membrane. The enzyme catalyses L-seryl-[protein] + ATP = O-phospho-L-seryl-[protein] + ADP + H(+). It catalyses the reaction L-threonyl-[protein] + ATP = O-phospho-L-threonyl-[protein] + ADP + H(+). Serine/threonine-protein kinase that may function as a signaling receptor of extracellular matrix component. The protein is Wall-associated receptor kinase-like 20 (WAKL20) of Arabidopsis thaliana (Mouse-ear cress).